We begin with the raw amino-acid sequence, 415 residues long: Probable carboxypeptidase ACLA_013260 (415 aa).

The first 17 residues, Met-1–Ala-17, serve as a signal peptide directing secretion. N-linked (GlcNAc...) asparagine glycosylation is present at Asn-97. Asp-145 serves as a coordination point for Zn(2+). The Proton acceptor role is filled by Glu-177. A Zn(2+)-binding site is contributed by Glu-178. Asn-271 carries an N-linked (GlcNAc...) asparagine glycan.

This sequence belongs to the peptidase M20A family. The cofactor is Zn(2+).

The protein localises to the secreted. The chain is Probable carboxypeptidase ACLA_013260 from Aspergillus clavatus (strain ATCC 1007 / CBS 513.65 / DSM 816 / NCTC 3887 / NRRL 1 / QM 1276 / 107).